The sequence spans 157 residues: Endoribonuclease YbeY (157 aa).

His114, His118, and His124 together coordinate Zn(2+).

It belongs to the endoribonuclease YbeY family. The cofactor is Zn(2+).

It localises to the cytoplasm. Its function is as follows. Single strand-specific metallo-endoribonuclease involved in late-stage 70S ribosome quality control and in maturation of the 3' terminus of the 16S rRNA. This Edwardsiella ictaluri (strain 93-146) protein is Endoribonuclease YbeY.